We begin with the raw amino-acid sequence, 336 residues long: Glyceraldehyde-3-phosphate dehydrogenase (336 aa).

NAD(+)-binding positions include 12–13 (RI), D34, R78, and S120. D-glyceraldehyde 3-phosphate contacts are provided by residues 151–153 (SCT) and T182. The active-site Nucleophile is C152. N183 lines the NAD(+) pocket. D-glyceraldehyde 3-phosphate contacts are provided by residues 211–212 (NG) and R234. An NAD(+)-binding site is contributed by N316.

This sequence belongs to the glyceraldehyde-3-phosphate dehydrogenase family. In terms of assembly, homotetramer.

The protein resides in the cytoplasm. It catalyses the reaction D-glyceraldehyde 3-phosphate + phosphate + NAD(+) = (2R)-3-phospho-glyceroyl phosphate + NADH + H(+). Its pathway is carbohydrate degradation; glycolysis; pyruvate from D-glyceraldehyde 3-phosphate: step 1/5. In terms of biological role, catalyzes the oxidative phosphorylation of glyceraldehyde 3-phosphate (G3P) to 1,3-bisphosphoglycerate (BPG) using the cofactor NAD. The first reaction step involves the formation of a hemiacetal intermediate between G3P and a cysteine residue, and this hemiacetal intermediate is then oxidized to a thioester, with concomitant reduction of NAD to NADH. The reduced NADH is then exchanged with the second NAD, and the thioester is attacked by a nucleophilic inorganic phosphate to produce BPG. The sequence is that of Glyceraldehyde-3-phosphate dehydrogenase (gap) from Heyndrickxia coagulans (Weizmannia coagulans).